We begin with the raw amino-acid sequence, 397 residues long: Phosphoglycerate kinase (397 aa).

Substrate-binding positions include 21–23, R37, 60–63, R119, and R152; these read DFN and HLGR. ATP-binding positions include K203, G294, E325, and 354–357; that span reads GGDS.

Belongs to the phosphoglycerate kinase family. In terms of assembly, monomer.

The protein localises to the cytoplasm. It catalyses the reaction (2R)-3-phosphoglycerate + ATP = (2R)-3-phospho-glyceroyl phosphate + ADP. It functions in the pathway carbohydrate degradation; glycolysis; pyruvate from D-glyceraldehyde 3-phosphate: step 2/5. This Chlorobium phaeobacteroides (strain DSM 266 / SMG 266 / 2430) protein is Phosphoglycerate kinase.